We begin with the raw amino-acid sequence, 357 residues long: uncharacterized protein (357 aa).

Helical transmembrane passes span 13-33, 44-64, 72-92, 148-168, 181-201, 203-223, 266-286, 293-313, and 327-347; these read PVTGIYNILLFNLFPLATYLV, IACTLLCSITVILAYRMCAVY, VSTFGLAYGFLIMMSLRTCFL, VLTYKSLGIRTAVYVGAFCFV, LPISANPWYIQVAFCVTSGFF, YLFINALYYLFAIIFVPLGIW, IALTGSKFLASCSCFFLSALF, SISGRCSPAFFFQLLIQPFLI, and YWVLIIEMLINGTYGMGVVLL.

The protein localises to the mitochondrion membrane. This is an uncharacterized protein from Schizosaccharomyces pombe (strain 972 / ATCC 24843) (Fission yeast).